Reading from the N-terminus, the 181-residue chain is TATA-box-binding protein (181 aa).

Tandem repeats lie at residues 7-83 and 98-173.

The protein belongs to the TBP family.

In terms of biological role, general factor that plays a role in the activation of archaeal genes transcribed by RNA polymerase. Binds specifically to the TATA box promoter element which lies close to the position of transcription initiation. In Methanococcus aeolicus (strain ATCC BAA-1280 / DSM 17508 / OCM 812 / Nankai-3), this protein is TATA-box-binding protein.